Reading from the N-terminus, the 393-residue chain is Putative competence-damage inducible protein (393 aa).

The protein belongs to the CinA family.

This Streptococcus suis (strain 98HAH33) protein is Putative competence-damage inducible protein.